The primary structure comprises 70 residues: SPbeta prophage-derived uncharacterized protein YorZ (70 aa).

The sequence is that of SPbeta prophage-derived uncharacterized protein YorZ (yorZ) from Bacillus subtilis (strain 168).